We begin with the raw amino-acid sequence, 62 residues long: UPF0370 protein ESA_00777 (62 aa).

The chain crosses the membrane as a helical span at residues 4 to 24; it reads LGKYWWVLVLVFLLGVLLNVI. The segment covering 36 to 51 has biased composition (basic and acidic residues); it reads MDNRPELPPHRDFNDK. The segment at 36–62 is disordered; that stretch reads MDNRPELPPHRDFNDKWDDEDDWPKKK. Residues 52 to 62 show a composition bias toward acidic residues; that stretch reads WDDEDDWPKKK.

This sequence belongs to the UPF0370 family.

The protein localises to the cell membrane. This is UPF0370 protein ESA_00777 from Cronobacter sakazakii (strain ATCC BAA-894) (Enterobacter sakazakii).